Here is a 31-residue protein sequence, read N- to C-terminus: Cytochrome b6-f complex subunit 6 (31 aa).

A helical transmembrane segment spans residues V4 to G24.

The protein belongs to the PetL family. The 4 large subunits of the cytochrome b6-f complex are cytochrome b6, subunit IV (17 kDa polypeptide, PetD), cytochrome f and the Rieske protein, while the 4 small subunits are PetG, PetL, PetM and PetN. The complex functions as a dimer.

It is found in the plastid. Its subcellular location is the chloroplast thylakoid membrane. Its function is as follows. Component of the cytochrome b6-f complex, which mediates electron transfer between photosystem II (PSII) and photosystem I (PSI), cyclic electron flow around PSI, and state transitions. PetL is important for photoautotrophic growth as well as for electron transfer efficiency and stability of the cytochrome b6-f complex. The polypeptide is Cytochrome b6-f complex subunit 6 (Oltmannsiellopsis viridis (Marine flagellate)).